Consider the following 752-residue polypeptide: Probable GTP-binding protein OBGC1, chloroplastic (752 aa).

The N-terminal 90 residues, 1–90, are a transit peptide targeting the chloroplast; the sequence is MAPAVAVVAA…RFPTANPEPR (90 aa). The segment at 19-121 is disordered; the sequence is FSAEARRNTK…EEDEVELGLR (103 aa). Basic residues predominate over residues 26–36; the sequence is NTKGSRSKRGS. Residues 103 to 117 show a composition bias toward acidic residues; it reads GDDEEDEEEEEDEVE. The 159-residue stretch at 294–452 folds into the Obg domain; the sequence is MRCFDTAKIY…MWIDLELKLV (159 aa). Positions 453–621 constitute an OBG-type G domain; it reads ADVGIVGAPN…VVLAAYKVLQ (169 aa). GTP-binding positions include 459–466, 484–488, 506–509, 573–576, and 602–604; these read GAPNAGKS, FTTLL, DLPG, NKMD, and SAM. Mg(2+) contacts are provided by Ser-466 and Thr-486. The region spanning 649–728 is the OCT domain; that stretch reads ERRAPMNEFE…VGEMEMVWTD (80 aa). The interval 728–752 is disordered; sequence DEPSKTRSSKTMNSKDDSVRWPEFG. Residues 740 to 752 are compositionally biased toward basic and acidic residues; sequence NSKDDSVRWPEFG.

This sequence belongs to the TRAFAC class OBG-HflX-like GTPase superfamily. OBG GTPase family. Mg(2+) is required as a cofactor.

The protein localises to the plastid. It localises to the chloroplast. Functionally, probable GTP-binding protein that may play a role in chloroplast development. This Oryza sativa subsp. indica (Rice) protein is Probable GTP-binding protein OBGC1, chloroplastic (OBGC1).